Here is a 139-residue protein sequence, read N- to C-terminus: Tetra-peptide repeat homeobox-like protein (139 aa).

2 disordered regions span residues 1–22 (MQDPRHPQGLPLSPGLPKRQRQ) and 78–139 (ERWF…QQPQ). The segment at residues 20–79 (QRQDRTIYNWKQQEVLENHFKEEQYPDYDTRQELAEMLNLREYQVQVWFKNRRAKRSRER) is a DNA-binding region (homeobox). Residues 82-139 (QKQLQQLQKHPQQQHPQQQHPQQQLQQQQPQQQPQQQQPQQQPQQQQPQQQQLHQQPQ) show a composition bias toward low complexity.

It belongs to the paired homeobox family.

Its subcellular location is the nucleus. In terms of biological role, transcription factor required for zygotic genome activation (ZGA), a critical event in early embryonic development during which the developmental control passes from maternally provided mRNAs to the expression of the zygotic genome after fertilization. Protein produced from maternal transcripts that binds and activates expression of key ZGA marker genes, such as NANOGNB, ZSCAN4, DUXB, KLF5 and DPPA3. Binds to regulatory DNA sequences containing a 5'-TAATCC-3' sequence motif. The polypeptide is Tetra-peptide repeat homeobox-like protein (Homo sapiens (Human)).